The chain runs to 553 residues: HTH-type transcriptional regulator SgrR (553 aa).

One can recognise an HTH marR-type domain in the interval 1 to 117; sequence MSTARLQQQF…LSQLGRSFRQ (117 aa). The H-T-H motif DNA-binding region spans 26–49; sequence LQELAEVLCCSRRHVRSLLGSMQQ. Residues 163–494 are solute-binding; sequence ELEPDLSHHW…EELHQDVELW (332 aa).

In terms of biological role, activates the small RNA gene sgrS under glucose-phosphate stress conditions as well as yfdZ. Represses its own transcription under both stress and non-stress conditions. Might act as a sensor of the intracellular accumulation of phosphoglucose by binding these molecules in its C-terminal solute-binding domain. The polypeptide is HTH-type transcriptional regulator SgrR (Yersinia enterocolitica serotype O:8 / biotype 1B (strain NCTC 13174 / 8081)).